The primary structure comprises 898 residues: Aconitate hydratase 1 (898 aa).

A2 carries the N-acetylalanine modification. Substrate is bound by residues Q90 and 209 to 211 (DSH). 3 residues coordinate [4Fe-4S] cluster: C441, C507, and C510. Substrate is bound by residues R540, R545, R703, and 784–785 (SR).

This sequence belongs to the aconitase/IPM isomerase family. Monomer. The cofactor is [4Fe-4S] cluster. As to expression, mostly expressed in roots, stems and leaves, also present in stems and flowers.

It localises to the cytoplasm. Its subcellular location is the mitochondrion. It carries out the reaction citrate = D-threo-isocitrate. The protein operates within carbohydrate metabolism; tricarboxylic acid cycle; isocitrate from oxaloacetate: step 2/2. Its function is as follows. Catalyzes the isomerization of citrate to isocitrate via cis-aconitate. Contributes to oxidative stress tolerance. May have a role in respiration. The sequence is that of Aconitate hydratase 1 from Arabidopsis thaliana (Mouse-ear cress).